The chain runs to 1009 residues: C2 domain-containing protein aex-1 (1009 aa).

The C2 domain maps to 812–945 (NAPHVDVHIS…ASEEKPTQRL (134 aa)).

The protein belongs to the unc-13 family. Expressed in intestine, body wall muscles and some amphid neurons.

Involved in retrograde signaling from post-synaptic cells to pre-synaptic neurons, probably by regulating vesicle exocytosis in post-synaptic cells. Acts in muscles, to regulate the localization of synaptic vesicle fusion protein unc-13 likely during vesicle exocytosis and thus regulate retrograde signaling at the neuromuscular junction (NMJ). Regulates anterior body muscle contractions (aBOC) and the expulsion steps during the defecation motor program (DMP). Probably by regulating DMP, plays a homeostatic role in the uptake of triglycerides. Regulates locomotion. This chain is C2 domain-containing protein aex-1, found in Caenorhabditis elegans.